A 253-amino-acid polypeptide reads, in one-letter code: UPF0280 protein MA_1715 (253 aa).

The protein belongs to the UPF0280 family.

The chain is UPF0280 protein MA_1715 from Methanosarcina acetivorans (strain ATCC 35395 / DSM 2834 / JCM 12185 / C2A).